Reading from the N-terminus, the 337-residue chain is Tert-butanol monooxygenase / tert-amyl alcohol desaturase reductase subunit (337 aa).

The 106-residue stretch at 9-114 (KYPKTALNLR…GHPRNNFPLI (106 aa)) folds into the FAD-binding FR-type domain. The 84-residue stretch at 254 to 337 (FQIKIASTGT…SKGATLVLDL (84 aa)) folds into the 2Fe-2S ferredoxin-type domain. Cys-288, Cys-293, Cys-296, and Cys-324 together coordinate [2Fe-2S] cluster.

This sequence belongs to the PDR/VanB family. In terms of assembly, this two-component enzyme is composed of an oxygenase (MdpJ) and a reductase (MdpK). [2Fe-2S] cluster serves as cofactor.

Reductase component of a two-component system involved in the degradation of tertiary alcohols such as tert-butyl alcohol (TBA) and tert-amyl alcohol (TAA). MdpK probably provides electrons via its [2Fe-2S] iron-sulfur cluster to the MdpJ oxygenase subunit. This Aquincola tertiaricarbonis protein is Tert-butanol monooxygenase / tert-amyl alcohol desaturase reductase subunit.